The following is a 230-amino-acid chain: Proteasome subunit alpha (230 aa).

Belongs to the peptidase T1A family. As to quaternary structure, the 20S proteasome core is composed of 14 alpha and 14 beta subunits that assemble into four stacked heptameric rings, resulting in a barrel-shaped structure. The two inner rings, each composed of seven catalytic beta subunits, are sandwiched by two outer rings, each composed of seven alpha subunits. The catalytic chamber with the active sites is on the inside of the barrel. Has a gated structure, the ends of the cylinder being occluded by the N-termini of the alpha-subunits. Is capped by the proteasome-associated ATPase, ARC.

The protein resides in the cytoplasm. Its pathway is protein degradation; proteasomal Pup-dependent pathway. Its activity is regulated as follows. The formation of the proteasomal ATPase ARC-20S proteasome complex, likely via the docking of the C-termini of ARC into the intersubunit pockets in the alpha-rings, may trigger opening of the gate for substrate entry. Interconversion between the open-gate and close-gate conformations leads to a dynamic regulation of the 20S proteasome proteolysis activity. Component of the proteasome core, a large protease complex with broad specificity involved in protein degradation. This chain is Proteasome subunit alpha, found in Thermomonospora curvata (strain ATCC 19995 / DSM 43183 / JCM 3096 / KCTC 9072 / NBRC 15933 / NCIMB 10081 / Henssen B9).